We begin with the raw amino-acid sequence, 360 residues long: Peptide chain release factor 1 (360 aa).

At glutamine 235 the chain carries N5-methylglutamine. Residues 285-313 form a disordered region; it reads KRQQAEASTRRNLLGSGDRSDRNRTYNFP.

Belongs to the prokaryotic/mitochondrial release factor family. In terms of processing, methylated by PrmC. Methylation increases the termination efficiency of RF1.

It localises to the cytoplasm. In terms of biological role, peptide chain release factor 1 directs the termination of translation in response to the peptide chain termination codons UAG and UAA. This chain is Peptide chain release factor 1, found in Enterobacter sp. (strain 638).